The chain runs to 674 residues: DNA ligase (674 aa).

Residues 35-39, 84-85, and E118 each bind NAD(+); these read DFEFD and SL. K120 serves as the catalytic N6-AMP-lysine intermediate. 4 residues coordinate NAD(+): R141, E184, K297, and K321. Residues C415, C418, C433, and C439 each coordinate Zn(2+). The BRCT domain maps to 598–674; the sequence is QVNRNFEGVT…VSEDEFEAML (77 aa).

This sequence belongs to the NAD-dependent DNA ligase family. LigA subfamily. Mg(2+) is required as a cofactor. It depends on Mn(2+) as a cofactor.

The enzyme catalyses NAD(+) + (deoxyribonucleotide)n-3'-hydroxyl + 5'-phospho-(deoxyribonucleotide)m = (deoxyribonucleotide)n+m + AMP + beta-nicotinamide D-nucleotide.. Its function is as follows. DNA ligase that catalyzes the formation of phosphodiester linkages between 5'-phosphoryl and 3'-hydroxyl groups in double-stranded DNA using NAD as a coenzyme and as the energy source for the reaction. It is essential for DNA replication and repair of damaged DNA. The chain is DNA ligase from Pelodictyon phaeoclathratiforme (strain DSM 5477 / BU-1).